The primary structure comprises 51 residues: Large ribosomal subunit protein eL39 (51 aa).

It belongs to the eukaryotic ribosomal protein eL39 family. Part of the 50S ribosomal subunit.

This is Large ribosomal subunit protein eL39 from Thermococcus kodakarensis (strain ATCC BAA-918 / JCM 12380 / KOD1) (Pyrococcus kodakaraensis (strain KOD1)).